We begin with the raw amino-acid sequence, 736 residues long: 1,4-alpha-glucan branching enzyme GlgB (736 aa).

Asp419 serves as the catalytic Nucleophile. Glu472 serves as the catalytic Proton donor.

It belongs to the glycosyl hydrolase 13 family. GlgB subfamily. Monomer.

It carries out the reaction Transfers a segment of a (1-&gt;4)-alpha-D-glucan chain to a primary hydroxy group in a similar glucan chain.. The protein operates within glycan biosynthesis; glycogen biosynthesis. Its function is as follows. Catalyzes the formation of the alpha-1,6-glucosidic linkages in glycogen by scission of a 1,4-alpha-linked oligosaccharide from growing alpha-1,4-glucan chains and the subsequent attachment of the oligosaccharide to the alpha-1,6 position. This Rhizobium meliloti (strain 1021) (Ensifer meliloti) protein is 1,4-alpha-glucan branching enzyme GlgB.